The chain runs to 167 residues: Protein-export protein SecB (167 aa).

It belongs to the SecB family. In terms of assembly, homotetramer, a dimer of dimers. One homotetramer interacts with 1 SecA dimer.

Its subcellular location is the cytoplasm. Its function is as follows. One of the proteins required for the normal export of preproteins out of the cell cytoplasm. It is a molecular chaperone that binds to a subset of precursor proteins, maintaining them in a translocation-competent state. It also specifically binds to its receptor SecA. The sequence is that of Protein-export protein SecB from Wolbachia pipientis subsp. Culex pipiens (strain wPip).